Consider the following 795-residue polypeptide: Protein espinas (795 aa).

The interval 30 to 96 is disordered; it reads GTGLTFPPHR…FVSPLQRRHC (67 aa). Low complexity predominate over residues 52 to 66; sequence ASMSSNVASTATSSN. Residues 135-243 enclose the PET domain; it reads LDFQRNSQSD…AVRLLSDERP (109 aa). LIM zinc-binding domains follow at residues 242 to 306, 307 to 367, and 368 to 430; these read RPCK…ETQK, PRCS…MFAE, and YCDY…GEPP. Disordered regions lie at residues 427 to 487 and 616 to 684; these read GEPP…GSAG and NRNT…EMQI. Basic and acidic residues-rich tracts occupy residues 459-471 and 637-649; these read RSGD…ESSR and LDNR…RFHS. Polar residues predominate over residues 650–662; it reads VQDTMSRSKSYTD. Over residues 666–675 the composition is skewed to basic residues; the sequence is ARRRRRRRNQ.

This sequence belongs to the prickle / espinas / testin family.

This is Protein espinas from Drosophila pseudoobscura pseudoobscura (Fruit fly).